A 304-amino-acid chain; its full sequence is Putative ankyrin repeat protein R602 (304 aa).

ANK repeat units lie at residues 82–117 (LIRYILYIAYQNHHQDCSVYYEMIKYLIDYGLDITF), 118–146 (NDNFAIKLASLCHENILKLVIDNGGDVHA), 147–176 (DNEFPICLAANHGRLSCVKLLVDCGVDPFC), 178–206 (DNIVIKLASIDYYDNVVEYMVSIGADINA), 207–236 (GNNYVLRYAIKNLDKKMIELAINAGASIND), and 238–266 (SPNDITHIIKYQSPTIMNILVEYGLDIST).

The polypeptide is Putative ankyrin repeat protein R602 (Acanthamoeba polyphaga (Amoeba)).